The primary structure comprises 540 residues: Probable tubulin polyglutamylase TTLL2 (540 aa).

The TTL domain maps to 41–384; the sequence is LKPLVFRVDE…NGLRSEEKKC (344 aa). ATP is bound by residues Lys169, 175–176, 197–200, and 210–212; these read RG, QKYI, and KCD. Arg175 is an a protein binding site. Arg236 lines the L-glutamate pocket. Residue 255–256 coordinates ATP; that stretch reads TN. Residues Ser258 and Lys278 each contribute to the L-glutamate site. Mg(2+) is bound by residues Asp330, Glu343, and Asn345. Residue Lys361 coordinates L-glutamate. The segment at 479 to 499 is disordered; the sequence is SQSQPHKMKGPAGDLPEAGST.

The protein belongs to the tubulin--tyrosine ligase family. Mg(2+) is required as a cofactor. Highly expressed in brain, kidney, liver and testis. Expressed in heart, lung, muscle and spleen.

In terms of biological role, probable tubulin polyglutamylase that generates side chains of glutamate on the gamma-carboxyl group of specific glutamate residues within the C-terminal tail of target proteins. Similar to TTLL1, may acquire enzymatic activity only in complex with other proteins as it is most likely lacking domains important for autonomous activity. Probably involved in the side-chain initiation step of the polyglutamylation reaction rather than the elongation step. This Mus musculus (Mouse) protein is Probable tubulin polyglutamylase TTLL2.